The following is a 157-amino-acid chain: S-ribosylhomocysteine lyase 2 (157 aa).

Positions 54, 58, and 124 each coordinate Fe cation.

Belongs to the LuxS family. Homodimer. Fe cation is required as a cofactor.

The catalysed reaction is S-(5-deoxy-D-ribos-5-yl)-L-homocysteine = (S)-4,5-dihydroxypentane-2,3-dione + L-homocysteine. Functionally, involved in the synthesis of autoinducer 2 (AI-2) which is secreted by bacteria and is used to communicate both the cell density and the metabolic potential of the environment. The regulation of gene expression in response to changes in cell density is called quorum sensing. Catalyzes the transformation of S-ribosylhomocysteine (RHC) to homocysteine (HC) and 4,5-dihydroxy-2,3-pentadione (DPD). This Lactobacillus delbrueckii subsp. bulgaricus (strain ATCC BAA-365 / Lb-18) protein is S-ribosylhomocysteine lyase 2.